Consider the following 64-residue polypeptide: Tracheal antimicrobial peptide (64 aa).

The first 26 residues, 1 to 26 (MRLHHLLLALLFLVLSAWSGFTQGVG), serve as a signal peptide directing secretion. 3 disulfides stabilise this stretch: Cys-31–Cys-60, Cys-38–Cys-53, and Cys-43–Cys-61.

This sequence belongs to the beta-defensin family. LAP/TAP subfamily. As to expression, tracheal epithelium.

The protein localises to the secreted. Has antibacterial activity in vitro against Escherichia coli, Staphylococcus aureus, Klebsiella pneumonia, and Pseudomonas aeruginosa. In addition, the peptide is active against Candida albicans, indicating a broad spectrum of activity. This is Tracheal antimicrobial peptide from Bos taurus (Bovine).